The sequence spans 732 residues: Aldehyde oxidoreductase molybdenum-binding subunit PaoC (732 aa).

Mo-molybdopterin cytosine dinucleotide is bound by residues glycine 241–phenylalanine 242, isoleucine 468–threonine 470, glycine 511–alanine 512, arginine 615–threonine 621, glutamine 625, and lysine 688–glycine 691. Catalysis depends on glutamate 692, which acts as the Proton acceptor.

It belongs to the xanthine dehydrogenase family. As to quaternary structure, heterotrimer composed of PaoA, PaoB and PaoC. It depends on Mo-molybdopterin cytosine dinucleotide as a cofactor.

It localises to the periplasm. It carries out the reaction an aldehyde + A + H2O = a carboxylate + AH2 + H(+). In terms of biological role, oxidizes aldehydes to the corresponding carboxylic acids with a preference for aromatic aldehydes. It might play a role in the detoxification of aldehydes to avoid cell damage. The sequence is that of Aldehyde oxidoreductase molybdenum-binding subunit PaoC from Escherichia coli O157:H7.